The following is a 431-amino-acid chain: Histidinol dehydrogenase (431 aa).

Residues Tyr-124, Gln-187, and Asn-210 each coordinate NAD(+). Substrate contacts are provided by Ser-236, Gln-258, and His-261. 2 residues coordinate Zn(2+): Gln-258 and His-261. Residues Glu-325 and His-326 each act as proton acceptor in the active site. His-326, Asp-359, Glu-413, and His-418 together coordinate substrate. Residue Asp-359 participates in Zn(2+) binding. His-418 is a binding site for Zn(2+).

It belongs to the histidinol dehydrogenase family. Zn(2+) is required as a cofactor.

It carries out the reaction L-histidinol + 2 NAD(+) + H2O = L-histidine + 2 NADH + 3 H(+). The protein operates within amino-acid biosynthesis; L-histidine biosynthesis; L-histidine from 5-phospho-alpha-D-ribose 1-diphosphate: step 9/9. Catalyzes the sequential NAD-dependent oxidations of L-histidinol to L-histidinaldehyde and then to L-histidine. The sequence is that of Histidinol dehydrogenase from Legionella pneumophila (strain Lens).